The chain runs to 503 residues: Aromatase 2 (503 aa).

Heme is bound at residue C437.

Belongs to the cytochrome P450 family. The cofactor is heme.

The protein resides in the membrane. It carries out the reaction testosterone + 3 reduced [NADPH--hemoprotein reductase] + 3 O2 = 17beta-estradiol + formate + 3 oxidized [NADPH--hemoprotein reductase] + 4 H2O + 4 H(+). The catalysed reaction is androst-4-ene-3,17-dione + 3 reduced [NADPH--hemoprotein reductase] + 3 O2 = estrone + formate + 3 oxidized [NADPH--hemoprotein reductase] + 4 H2O + 4 H(+). Catalyzes the formation of aromatic C18 estrogens from C19 androgens. The chain is Aromatase 2 (CYP19A2) from Sus scrofa (Pig).